Consider the following 817-residue polypeptide: DNA mismatch repair protein MutS (817 aa).

604–611 (GPNMSGKS) lines the ATP pocket.

It belongs to the DNA mismatch repair MutS family.

Its function is as follows. This protein is involved in the repair of mismatches in DNA. It is possible that it carries out the mismatch recognition step. This protein has a weak ATPase activity. This Petrotoga mobilis (strain DSM 10674 / SJ95) protein is DNA mismatch repair protein MutS.